The primary structure comprises 883 residues: MNEQYSAMRSNVSMLGKLLGDTIKDALGENILDRVETIRKLSKSSRAGNDAHRQELLSTLQNLSNDELLPVARAFSQFLNLTNVAEQYHTISPNGEGAKNPELLLQTFQRLKQQPNLTEAAVCEALGSLSLELVLTAHPTEITRRTLIHKLVEVNSCLKQLDHNDLSDYEHAQIMRRLRQLVAQAWHTDEIRKYRPSPVDEAKWGFAVVENSLWEGVPQFLRELNEQVEAAFGYTLPVDFVPVQFTSWMGGDRDGNPNVTADITRHVLQLSRWKATDLFLRDIAVLISELSMSECTPEVRELCGNPEALEPYREIMKNLRSQLMSTQAYLAGRLKGERLTRPANLLIANEQLWEPLYTCYQSLQACGMGIIANGQLLDTLRRVKCFGVPLVRIDIRQESTRHTEAIAEITRYLGLGDYESWSEADKQAFLIRELNSKRPLTPRQWEPSADTKEVLDTCRVAAEAPKGSIAAYVISMAKTPSDVLAVHLLLKEAGIDYAMPVAPLFETLDDLNNANGVMSQLLNIDWYRGLIQGKQMVMIGYSDSAKDAGVMAASWAQYQAQDALIKTCEKAGITLTLFHGRGGSIGRGGAPAHAALLSQPPGSLKGGLRVTEQGEMIRFKYGLPEVTISSLSLYTGAILEANLLPPPEPKTEWIGIMERLSAVSCKMYRGYVREHAEFVPYFRSATPEQELAKLPLGSRPAKRRPTGGVESLRAIPWIFAWTQNRLMLPAWLGAGAALQQVMEDGHQDQLEAMCRDWPFFSTRLGMLEMVFSKADLWLAEYYDQRLVDKSLWPLGKQLRDQLESDIKAVLTIANDAHLMADQPWIAESIALRNVYTDPLNVLQAELLHRSRQQEKAGGEPDARVEQALMVTIAGVAAGMRNTG.

Catalysis depends on residues His-138 and Lys-546.

It belongs to the PEPCase type 1 family. Mg(2+) serves as cofactor.

The enzyme catalyses oxaloacetate + phosphate = phosphoenolpyruvate + hydrogencarbonate. Functionally, forms oxaloacetate, a four-carbon dicarboxylic acid source for the tricarboxylic acid cycle. This chain is Phosphoenolpyruvate carboxylase, found in Erwinia tasmaniensis (strain DSM 17950 / CFBP 7177 / CIP 109463 / NCPPB 4357 / Et1/99).